A 1523-amino-acid polypeptide reads, in one-letter code: Slit homolog 3 protein (1523 aa).

The N-terminal stretch at Met1 to Ala33 is a signal peptide. The region spanning Cys34–Arg61 is the LRRNT domain. 6 LRR repeats span residues Asn62–Gly83, Asn86–Asp107, Gln110–Ser131, Lys134–Gly155, Gly158–Ala179, and Asp182–His203. A glycan (N-linked (GlcNAc...) asparagine) is linked at Asn72. Residue Asn192 is glycosylated (N-linked (GlcNAc...) asparagine). The 51-residue stretch at Asn215–Gly265 folds into the LRRCT 1 domain. In terms of domain architecture, LRRNT 2 spans Pro271–Glu307. Residues Cys284 and Cys293 are joined by a disulfide bond. LRR repeat units follow at residues Gly308–Gln329, Lys332–Gly353, Ser356–Gly377, Ser380–Asp401, and Asn404–Pro425. In terms of domain architecture, LRRCT 2 spans Asn437–Gly487. 4 disulfides stabilise this stretch: Cys441–Cys464, Cys443–Cys485, Cys505–Cys511, and Cys509–Cys518. The 37-residue stretch at Ser496–Glu532 folds into the LRRNT 3 domain. 5 LRR repeats span residues Tyr533 to Lys554, Asn558 to Gly579, Gly582 to Gly603, Ser606 to Gly627, and Ser630 to Thr651. Asn563 carries N-linked (GlcNAc...) asparagine glycosylation. Asn622 carries an N-linked (GlcNAc...) asparagine glycan. The LRRCT 3 domain maps to Asn663–Gly713. Cystine bridges form between Cys667–Cys690 and Cys669–Cys711. Positions Glu716 to Lys752 constitute an LRRNT 4 domain. LRR repeat units follow at residues Asp753–Phe774, Gln776–Asn797, His800–Gly821, and Ser824–Asp845. Residues Asn784, Asn792, and Asn797 are each glycosylated (N-linked (GlcNAc...) asparagine). In terms of domain architecture, LRRCT 4 spans Asn857–Gly907. EGF-like domains are found at residues Asn918–Thr953, Pro955–Glu994, Asn996–Asp1032, Val1034–Glu1072, Asn1074–Glu1110, and Gln1119–Glu1155. Cystine bridges form between Cys920–Cys931, Cys925–Cys941, Cys943–Cys952, Cys959–Cys970, Cys964–Cys982, Cys984–Cys993, Cys1000–Cys1011, Cys1005–Cys1020, Cys1022–Cys1031, Cys1038–Cys1051, Cys1045–Cys1060, Cys1062–Cys1071, Cys1078–Cys1089, Cys1083–Cys1098, Cys1100–Cys1109, Cys1123–Cys1134, Cys1128–Cys1143, and Cys1145–Cys1154. A glycan (N-linked (GlcNAc...) asparagine) is linked at Asn928. N-linked (GlcNAc...) asparagine glycosylation is present at Asn1025. One can recognise a Laminin G-like domain in the interval Ile1158–Cys1332. Asn1181 and Asn1247 each carry an N-linked (GlcNAc...) asparagine glycan. Disulfide bonds link Cys1305-Cys1332, Cys1355-Cys1364, Cys1372-Cys1382, Cys1377-Cys1391, and Cys1393-Cys1402. EGF-like domains lie at His1340–Asp1365 and Ala1368–Asp1403. Asn1406 carries an N-linked (GlcNAc...) asparagine glycan. Positions Ser1408 to Glu1444 constitute an EGF-like 9 domain. 7 cysteine pairs are disulfide-bonded: Cys1412-Cys1422, Cys1417-Cys1432, Cys1434-Cys1443, Cys1449-Cys1487, Cys1467-Cys1501, Cys1478-Cys1517, and Cys1482-Cys1519. One can recognise a CTCK domain in the interval Cys1449 to Ser1523.

It is found in the secreted. May act as molecular guidance cue in cellular migration, and function may be mediated by interaction with roundabout homolog receptors. The chain is Slit homolog 3 protein (Slit3) from Mus musculus (Mouse).